Here is a 211-residue protein sequence, read N- to C-terminus: Small ribosomal subunit protein uS3 (211 aa).

The region spanning 38 to 106 (LRSFVKKTFH…EVELHIVEVK (69 aa)) is the KH type-2 domain.

This sequence belongs to the universal ribosomal protein uS3 family. In terms of assembly, part of the 30S ribosomal subunit. Forms a tight complex with proteins S10 and S14.

In terms of biological role, binds the lower part of the 30S subunit head. Binds mRNA in the 70S ribosome, positioning it for translation. The sequence is that of Small ribosomal subunit protein uS3 from Anaplasma phagocytophilum (strain HZ).